The following is a 269-amino-acid chain: GTP cyclohydrolase FolE2 (269 aa).

The protein belongs to the GTP cyclohydrolase IV family.

It carries out the reaction GTP + H2O = 7,8-dihydroneopterin 3'-triphosphate + formate + H(+). Its pathway is cofactor biosynthesis; 7,8-dihydroneopterin triphosphate biosynthesis; 7,8-dihydroneopterin triphosphate from GTP: step 1/1. Converts GTP to 7,8-dihydroneopterin triphosphate. The polypeptide is GTP cyclohydrolase FolE2 (Burkholderia ambifaria (strain ATCC BAA-244 / DSM 16087 / CCUG 44356 / LMG 19182 / AMMD) (Burkholderia cepacia (strain AMMD))).